A 416-amino-acid chain; its full sequence is 2,3-bisphosphoglycerate-independent phosphoglycerate mutase (416 aa).

The protein belongs to the BPG-independent phosphoglycerate mutase family. A-PGAM subfamily.

It catalyses the reaction (2R)-2-phosphoglycerate = (2R)-3-phosphoglycerate. Its pathway is carbohydrate degradation; glycolysis; pyruvate from D-glyceraldehyde 3-phosphate: step 3/5. Functionally, catalyzes the interconversion of 2-phosphoglycerate and 3-phosphoglycerate. The polypeptide is 2,3-bisphosphoglycerate-independent phosphoglycerate mutase (Ignicoccus hospitalis (strain KIN4/I / DSM 18386 / JCM 14125)).